The sequence spans 334 residues: Holliday junction branch migration complex subunit RuvB (334 aa).

The large ATPase domain (RuvB-L) stretch occupies residues 4–184 (ADRLIQPQDL…FGIPLRLEFY (181 aa)). Residues Arg-24, Gly-65, Lys-68, Thr-69, Thr-70, 131–133 (EDY), Arg-174, Tyr-184, and Arg-221 contribute to the ATP site. Mg(2+) is bound at residue Thr-69. The segment at 185-255 (NVRDLSSIVA…VAQSALDLLD (71 aa)) is small ATPAse domain (RuvB-S). Positions 258–334 (SEGFDYMDRK…YSHFDLIKPD (77 aa)) are head domain (RuvB-H). The DNA site is built by Arg-294, Arg-313, and Arg-318.

It belongs to the RuvB family. Homohexamer. Forms an RuvA(8)-RuvB(12)-Holliday junction (HJ) complex. HJ DNA is sandwiched between 2 RuvA tetramers; dsDNA enters through RuvA and exits via RuvB. An RuvB hexamer assembles on each DNA strand where it exits the tetramer. Each RuvB hexamer is contacted by two RuvA subunits (via domain III) on 2 adjacent RuvB subunits; this complex drives branch migration. In the full resolvosome a probable DNA-RuvA(4)-RuvB(12)-RuvC(2) complex forms which resolves the HJ.

The protein resides in the cytoplasm. It carries out the reaction ATP + H2O = ADP + phosphate + H(+). The RuvA-RuvB-RuvC complex processes Holliday junction (HJ) DNA during genetic recombination and DNA repair, while the RuvA-RuvB complex plays an important role in the rescue of blocked DNA replication forks via replication fork reversal (RFR). RuvA specifically binds to HJ cruciform DNA, conferring on it an open structure. The RuvB hexamer acts as an ATP-dependent pump, pulling dsDNA into and through the RuvAB complex. RuvB forms 2 homohexamers on either side of HJ DNA bound by 1 or 2 RuvA tetramers; 4 subunits per hexamer contact DNA at a time. Coordinated motions by a converter formed by DNA-disengaged RuvB subunits stimulates ATP hydrolysis and nucleotide exchange. Immobilization of the converter enables RuvB to convert the ATP-contained energy into a lever motion, pulling 2 nucleotides of DNA out of the RuvA tetramer per ATP hydrolyzed, thus driving DNA branch migration. The RuvB motors rotate together with the DNA substrate, which together with the progressing nucleotide cycle form the mechanistic basis for DNA recombination by continuous HJ branch migration. Branch migration allows RuvC to scan DNA until it finds its consensus sequence, where it cleaves and resolves cruciform DNA. In Shewanella amazonensis (strain ATCC BAA-1098 / SB2B), this protein is Holliday junction branch migration complex subunit RuvB.